We begin with the raw amino-acid sequence, 134 residues long: Phosphoribosyl-AMP cyclohydrolase (134 aa).

Position 80 (Asp-80) interacts with Mg(2+). Cys-81 is a binding site for Zn(2+). Asp-82 and Asp-84 together coordinate Mg(2+). Residues Cys-98 and Cys-105 each coordinate Zn(2+).

It belongs to the PRA-CH family. Homodimer. Requires Mg(2+) as cofactor. Zn(2+) is required as a cofactor.

The protein localises to the cytoplasm. The catalysed reaction is 1-(5-phospho-beta-D-ribosyl)-5'-AMP + H2O = 1-(5-phospho-beta-D-ribosyl)-5-[(5-phospho-beta-D-ribosylamino)methylideneamino]imidazole-4-carboxamide. Its pathway is amino-acid biosynthesis; L-histidine biosynthesis; L-histidine from 5-phospho-alpha-D-ribose 1-diphosphate: step 3/9. Functionally, catalyzes the hydrolysis of the adenine ring of phosphoribosyl-AMP. The polypeptide is Phosphoribosyl-AMP cyclohydrolase (Bordetella bronchiseptica (strain ATCC BAA-588 / NCTC 13252 / RB50) (Alcaligenes bronchisepticus)).